The chain runs to 294 residues: Nucleotide-binding protein NT01CX_1284 (294 aa).

Gly8–Ser15 provides a ligand contact to ATP. Asp59–Gly62 provides a ligand contact to GTP.

Belongs to the RapZ-like family.

In terms of biological role, displays ATPase and GTPase activities. In Clostridium novyi (strain NT), this protein is Nucleotide-binding protein NT01CX_1284.